A 397-amino-acid polypeptide reads, in one-letter code: Tryptophan synthase beta chain (397 aa).

K87 is modified (N6-(pyridoxal phosphate)lysine).

The protein belongs to the TrpB family. In terms of assembly, tetramer of two alpha and two beta chains. Pyridoxal 5'-phosphate serves as cofactor.

It carries out the reaction (1S,2R)-1-C-(indol-3-yl)glycerol 3-phosphate + L-serine = D-glyceraldehyde 3-phosphate + L-tryptophan + H2O. It functions in the pathway amino-acid biosynthesis; L-tryptophan biosynthesis; L-tryptophan from chorismate: step 5/5. Functionally, the beta subunit is responsible for the synthesis of L-tryptophan from indole and L-serine. This is Tryptophan synthase beta chain from Escherichia coli O157:H7.